The sequence spans 1377 residues: DNA-directed RNA polymerase subunit beta'' (1377 aa).

The Zn(2+) site is built by Cys220, Cys291, Cys298, and Cys301.

The protein belongs to the RNA polymerase beta' chain family. RpoC2 subfamily. As to quaternary structure, in plastids the minimal PEP RNA polymerase catalytic core is composed of four subunits: alpha, beta, beta', and beta''. When a (nuclear-encoded) sigma factor is associated with the core the holoenzyme is formed, which can initiate transcription. It depends on Zn(2+) as a cofactor.

It is found in the plastid. The protein resides in the chloroplast. It carries out the reaction RNA(n) + a ribonucleoside 5'-triphosphate = RNA(n+1) + diphosphate. Its function is as follows. DNA-dependent RNA polymerase catalyzes the transcription of DNA into RNA using the four ribonucleoside triphosphates as substrates. The sequence is that of DNA-directed RNA polymerase subunit beta'' from Nandina domestica (Heavenly bamboo).